We begin with the raw amino-acid sequence, 485 residues long: Glycogen synthase (485 aa).

K15 is a binding site for ADP-alpha-D-glucose.

Belongs to the glycosyltransferase 1 family. Bacterial/plant glycogen synthase subfamily.

The enzyme catalyses [(1-&gt;4)-alpha-D-glucosyl](n) + ADP-alpha-D-glucose = [(1-&gt;4)-alpha-D-glucosyl](n+1) + ADP + H(+). The protein operates within glycan biosynthesis; glycogen biosynthesis. Synthesizes alpha-1,4-glucan chains using ADP-glucose. The chain is Glycogen synthase from Rhodospirillum rubrum (strain ATCC 11170 / ATH 1.1.1 / DSM 467 / LMG 4362 / NCIMB 8255 / S1).